Consider the following 130-residue polypeptide: Large ribosomal subunit protein bL12 (130 aa).

It belongs to the bacterial ribosomal protein bL12 family. In terms of assembly, homodimer. Part of the ribosomal stalk of the 50S ribosomal subunit. Forms a multimeric L10(L12)X complex, where L10 forms an elongated spine to which 2 to 4 L12 dimers bind in a sequential fashion. Binds GTP-bound translation factors.

In terms of biological role, forms part of the ribosomal stalk which helps the ribosome interact with GTP-bound translation factors. Is thus essential for accurate translation. The sequence is that of Large ribosomal subunit protein bL12 from Chlamydia trachomatis serovar L2 (strain ATCC VR-902B / DSM 19102 / 434/Bu).